The primary structure comprises 374 residues: Probable quinol oxidase subunit 2 (374 aa).

A signal peptide spans 1–19; it reads MSKFKSLLLMFGTLILLSG. Cys-20 carries N-palmitoyl cysteine lipidation. Cys-20 carries the S-diacylglycerol cysteine lipid modification. Helical transmembrane passes span 43-63 and 82-102; these read SIIF…IFIF and IETI…IPTV. A disordered region spans residues 321-374; it reads MKPMILGNNDPYDNEFKKEEDHNSKEMEKISKSAKDENASKFGSKADNDHGGGH. Over residues 334-374 the composition is skewed to basic and acidic residues; sequence NEFKKEEDHNSKEMEKISKSAKDENASKFGSKADNDHGGGH.

It belongs to the cytochrome c oxidase subunit 2 family.

The protein resides in the cell membrane. It carries out the reaction 2 a quinol + O2 = 2 a quinone + 2 H2O. Functionally, catalyzes quinol oxidation with the concomitant reduction of oxygen to water. Subunit II transfers the electrons from a quinol to the binuclear center of the catalytic subunit I. This is Probable quinol oxidase subunit 2 (qoxA) from Staphylococcus haemolyticus (strain JCSC1435).